Here is a 265-residue protein sequence, read N- to C-terminus: Sulfur carrier protein FdhD (265 aa).

Cys-107 serves as the catalytic Cysteine persulfide intermediate.

This sequence belongs to the FdhD family.

It localises to the cytoplasm. Required for formate dehydrogenase (FDH) activity. Acts as a sulfur carrier protein that transfers sulfur from IscS to the molybdenum cofactor prior to its insertion into FDH. This Staphylococcus aureus (strain MRSA252) protein is Sulfur carrier protein FdhD.